Reading from the N-terminus, the 119-residue chain is Protein TusC (119 aa).

The protein belongs to the DsrF/TusC family. As to quaternary structure, heterohexamer, formed by a dimer of trimers. The hexameric TusBCD complex contains 2 copies each of TusB, TusC and TusD. The TusBCD complex interacts with TusE.

The protein resides in the cytoplasm. Functionally, part of a sulfur-relay system required for 2-thiolation of 5-methylaminomethyl-2-thiouridine (mnm(5)s(2)U) at tRNA wobble positions. This is Protein TusC from Buchnera aphidicola subsp. Acyrthosiphon pisum (strain 5A).